The primary structure comprises 282 residues: 40S small subunit processome assembly factor 1 (282 aa).

Disordered regions lie at residues 27-98 (YDLG…SEVP) and 121-143 (FHSR…NKTK). Residues 48 to 59 (KRDSETVADRAA) are compositionally biased toward basic and acidic residues. Phosphoserine is present on residues Ser-67 and Ser-75. Residues 89-98 (SAPAAPSEVP) are compositionally biased toward low complexity. Basic and acidic residues predominate over residues 131–143 (KSEEDKPAKNKTK). Lys-173 carries the N6-acetyllysine modification. Over residues 208-226 (EKRTSMEEEKRAAQETDIF) the composition is skewed to basic and acidic residues. Positions 208-254 (EKRTSMEEEKRAAQETDIFKRKKRKGRSQEDRRSKKLAPSILSSGRA) are disordered. Ser-268 is modified (phosphoserine).

As to quaternary structure, part of the small subunit (SSU) processome, composed of more than 70 proteins and the RNA chaperone small nucleolar RNA (snoRNA) U3.

The protein localises to the chromosome. It localises to the nucleus. The protein resides in the nucleolus. In terms of biological role, part of the small subunit (SSU) processome, first precursor of the small eukaryotic ribosomal subunit. During the assembly of the SSU processome in the nucleolus, many ribosome biogenesis factors, an RNA chaperone and ribosomal proteins associate with the nascent pre-rRNA and work in concert to generate RNA folding, modifications, rearrangements and cleavage as well as targeted degradation of pre-ribosomal RNA by the RNA exosome. Prevents helicase DHX37 to be recruited before post-A1 state. This is 40S small subunit processome assembly factor 1 from Rattus norvegicus (Rat).